The chain runs to 447 residues: tRNA(Ile)-lysidine synthase (447 aa).

31–36 (SGGMDS) provides a ligand contact to ATP.

The protein belongs to the tRNA(Ile)-lysidine synthase family.

The protein localises to the cytoplasm. It carries out the reaction cytidine(34) in tRNA(Ile2) + L-lysine + ATP = lysidine(34) in tRNA(Ile2) + AMP + diphosphate + H(+). In terms of biological role, ligates lysine onto the cytidine present at position 34 of the AUA codon-specific tRNA(Ile) that contains the anticodon CAU, in an ATP-dependent manner. Cytidine is converted to lysidine, thus changing the amino acid specificity of the tRNA from methionine to isoleucine. This Pseudothermotoga lettingae (strain ATCC BAA-301 / DSM 14385 / NBRC 107922 / TMO) (Thermotoga lettingae) protein is tRNA(Ile)-lysidine synthase.